A 65-amino-acid chain; its full sequence is Large ribosomal subunit protein bL35 (65 aa).

It belongs to the bacterial ribosomal protein bL35 family.

This Thermotoga maritima (strain ATCC 43589 / DSM 3109 / JCM 10099 / NBRC 100826 / MSB8) protein is Large ribosomal subunit protein bL35.